We begin with the raw amino-acid sequence, 299 residues long: MKHIISAYNFSRDELEDIFALTDKYSKNLNDTRKILSGKTISIAFFEPSTRTYLSFQKAIINLGGDVIGFSGEESTSVAKGENLADTIRMLNNYSDGIVMRHKYDGASRFASEISDIPVINAGDGKHEHPTQAVIDIYTINKHFNTIDGLVFALLGDLKYARTVNSLLRILTRFRPKLVYLISPQLLRARKEILDELNYPVKEVENPFEVINEVDVLYVTRIQKERFVDEMEYEKIKGSYIVSLDLANKMKKDSIILHPLPRVNEIDRKVDKTTKAKYFEQASYGVPVRMSILTKIYGE.

Carbamoyl phosphate is bound by residues R51 and T52. K80 provides a ligand contact to L-aspartate. Carbamoyl phosphate is bound by residues R101, H129, and Q132. 2 residues coordinate L-aspartate: R162 and R221. L260 and P261 together coordinate carbamoyl phosphate.

Belongs to the aspartate/ornithine carbamoyltransferase superfamily. ATCase family. Heterooligomer of catalytic and regulatory chains.

It catalyses the reaction carbamoyl phosphate + L-aspartate = N-carbamoyl-L-aspartate + phosphate + H(+). It functions in the pathway pyrimidine metabolism; UMP biosynthesis via de novo pathway; (S)-dihydroorotate from bicarbonate: step 2/3. In terms of biological role, catalyzes the condensation of carbamoyl phosphate and aspartate to form carbamoyl aspartate and inorganic phosphate, the committed step in the de novo pyrimidine nucleotide biosynthesis pathway. This chain is Aspartate carbamoyltransferase catalytic subunit, found in Sulfolobus acidocaldarius (strain ATCC 33909 / DSM 639 / JCM 8929 / NBRC 15157 / NCIMB 11770).